Consider the following 249-residue polypeptide: Large ribosomal subunit protein uL1 (249 aa).

It belongs to the universal ribosomal protein uL1 family. Part of the 50S ribosomal subunit.

Binds directly to 23S rRNA. The L1 stalk is quite mobile in the ribosome, and is involved in E site tRNA release. Its function is as follows. Protein L1 is also a translational repressor protein, it controls the translation of the L11 operon by binding to its mRNA. The polypeptide is Large ribosomal subunit protein uL1 (Orientia tsutsugamushi (strain Ikeda) (Rickettsia tsutsugamushi)).